The primary structure comprises 911 residues: MVDYHAANQSYQYGPSSAGNGAGGGGSMGDYMAQEDDWDRDLLLDPAWEKQQRKTFTAWCNSHLRKAGTQIENIDEDFRDGLKLMLLLEVISGERLPKPERGKMRVHKINNVNKALDFIASKGVKLVSIGAEEIVDGNAKMTLGMIWTIILRFAIQDISVEETSAKEGLLLWCQRKTAPYKNVNVQNFHISWKDGLAFNALIHRHRPELIEYDKLRKDDPVTNLNNAFEVAEKYLDIPKMLDAEDIVNTARPDEKAIMTYVSSFYHAFSGAQKAETAANRICKVLAVNQENEHLMEDYEKLASDLLEWIRRTIPWLEDRVPQKTIQEMQQKLEDFRDYRRVHKPPKVQEKCQLEINFNTLQTKLRLSNRPAFMPSEGKMVSDINNGWQHLEQAEKGYEEWLLNEIRRLERLDHLAEKFRQKASIHEAWTDGKEAMLKHRDYETATLSDIKALIRKHEAFESDLAAHQDRVEQIAAIAQELNELDYYDSHNVNTRCQKICDQWDALGSLTHSRREALEKTEKQLEAIDQLHLEYAKRAAPFNNWMESAMEDLQDMFIVHTIEEIEGLISAHDQFKSTLPDADREREAILAIHKEAQRIAESNHIKLSGSNPYTTVTPQIINSKWEKVQQLVPKRDHALLEEQSKQQSNEHLRRQFASQANVVGPWIQTKMEEIGRISIEMNGTLEDQLSHLKQYERSIVDYKPNLDLLEQQHQLIQEALIFDNKHTNYTMEHIRVGWEQLLTTIARTINEVENQILTRDAKGISQEQMQEFRASFNHFDKDHGGALGPEEFKACLISLGYDVENDRQGEAEFNRIMSLVDPNHSGLVTFQAFIDFMSRETTDTDTADQVIASFKVLAGDKNFITAEELRRELPPDQAEYCIARMAPYQGPDAVPGALDYKSFSTALYGESDL.

The interval 1 to 269 (MVDYHAANQS…YVSSFYHAFS (269 aa)) is actin-binding. The segment at 12 to 26 (QYGPSSAGNGAGGGG) is interaction with VCL. A Phosphotyrosine modification is found at Y31. The tract at residues 40 to 61 (RDLLLDPAWEKQQRKTFTAWCN) is interaction with VCL. Calponin-homology (CH) domains follow at residues 50 to 154 (KQQR…LRFA) and 163 to 269 (TSAK…HAFS). The LXXLL motif motif lies at 84 to 88 (LMLLL). The segment at 108–126 (KINNVNKALDFIASKGVKL) is interaction with VCL. K114 bears the N6-acetyllysine mark. The interval 177-192 (TAPYKNVNVQNFHISW) is polyphosphoinositide (PIP2)-binding. At K214 the chain carries N6-acetyllysine. T249 carries the post-translational modification Phosphothreonine. Spectrin repeat units follow at residues 293–403 (HLME…WLLN), 413–518 (HLAE…ALEK), 528–639 (QLHL…ALLE), and 649–752 (HLRR…EVEN). 2 positions are modified to N6-acetyllysine: K592 and K625. At S696 the chain carries Phosphoserine. The interval 736–911 (WEQLLTTIAR…STALYGESDL (176 aa)) is mediates interaction with MICALL2. EF-hand domains are found at residues 765 to 800 (EQMQ…LGYD) and 806 to 841 (QGEA…ETTD). A Ca(2+)-binding site is contributed by D778. K779 bears the N6-acetyllysine mark. Ca(2+)-binding residues include D780 and E789. K859 carries the N6-acetyllysine modification. S909 is modified (phosphoserine).

It belongs to the alpha-actinin family. As to quaternary structure, homodimer; antiparallel. Binds TRIM3 at the N-terminus. Interacts with MICALL2 (preferentially in opened conformation); stimulated by RAB13 activation. Identified in a complex with CASK, IQGAP1, MAGI2, NPHS1, SPTAN1 and SPTBN1. Identified in a IGF2BP1-dependent mRNP granule complex containing untranslated mRNAs. Component of the CART complex, at least composed of ACTN4, HGS/HRS, MYO5B and TRIM3. Interacts with MAGI1. Interacts with PDLIM2. Interacts with PPARG and RARA. Binds to VCL; this interaction triggers VCL conformational changes. Interacts with SEPTIN14. Interacts with IGSF8. Widely expressed.

It is found in the nucleus. The protein localises to the cytoplasm. The protein resides in the cell junction. Its subcellular location is the cytoskeleton. It localises to the stress fiber. It is found in the perinuclear region. Functionally, F-actin cross-linking protein which is thought to anchor actin to a variety of intracellular structures. This is a bundling protein. Probably involved in vesicular trafficking via its association with the CART complex. The CART complex is necessary for efficient transferrin receptor recycling but not for EGFR degradation. Involved in tight junction assembly in epithelial cells probably through interaction with MICALL2. Links MICALL2 to the actin cytoskeleton and recruits it to the tight junctions. May also function as a transcriptional coactivator, stimulating transcription mediated by the nuclear hormone receptors PPARG and RARA. Association with IGSF8 regulates the immune synapse formation and is required for efficient T-cell activation. In Homo sapiens (Human), this protein is Alpha-actinin-4.